A 286-amino-acid chain; its full sequence is Bifunctional protein FolD (286 aa).

Residues 166 to 168 (GAS) and Ile-232 each bind NADP(+).

It belongs to the tetrahydrofolate dehydrogenase/cyclohydrolase family. As to quaternary structure, homodimer.

The enzyme catalyses (6R)-5,10-methylene-5,6,7,8-tetrahydrofolate + NADP(+) = (6R)-5,10-methenyltetrahydrofolate + NADPH. It carries out the reaction (6R)-5,10-methenyltetrahydrofolate + H2O = (6R)-10-formyltetrahydrofolate + H(+). Its pathway is one-carbon metabolism; tetrahydrofolate interconversion. In terms of biological role, catalyzes the oxidation of 5,10-methylenetetrahydrofolate to 5,10-methenyltetrahydrofolate and then the hydrolysis of 5,10-methenyltetrahydrofolate to 10-formyltetrahydrofolate. This is Bifunctional protein FolD from Shewanella piezotolerans (strain WP3 / JCM 13877).